The following is a 690-amino-acid chain: Glycine--tRNA ligase beta subunit (690 aa).

The protein belongs to the class-II aminoacyl-tRNA synthetase family. As to quaternary structure, tetramer of two alpha and two beta subunits.

It localises to the cytoplasm. The enzyme catalyses tRNA(Gly) + glycine + ATP = glycyl-tRNA(Gly) + AMP + diphosphate. In Tolumonas auensis (strain DSM 9187 / NBRC 110442 / TA 4), this protein is Glycine--tRNA ligase beta subunit.